We begin with the raw amino-acid sequence, 122 residues long: Small ribosomal subunit protein uS12c (122 aa).

Belongs to the universal ribosomal protein uS12 family. As to quaternary structure, part of the 30S ribosomal subunit.

The protein localises to the plastid. Its subcellular location is the chloroplast. In terms of biological role, with S4 and S5 plays an important role in translational accuracy. Located at the interface of the 30S and 50S subunits. The polypeptide is Small ribosomal subunit protein uS12c (rps12) (Mesostigma viride (Green alga)).